The primary structure comprises 692 residues: Elongation factor G (692 aa).

One can recognise a tr-type G domain in the interval 8 to 282 (EKVRNIGIAA…AVVDYLPAPT (275 aa)). Residues 17–24 (AHIDAGKT), 81–85 (DTPGH), and 135–138 (NKMD) contribute to the GTP site.

Belongs to the TRAFAC class translation factor GTPase superfamily. Classic translation factor GTPase family. EF-G/EF-2 subfamily.

The protein resides in the cytoplasm. Catalyzes the GTP-dependent ribosomal translocation step during translation elongation. During this step, the ribosome changes from the pre-translocational (PRE) to the post-translocational (POST) state as the newly formed A-site-bound peptidyl-tRNA and P-site-bound deacylated tRNA move to the P and E sites, respectively. Catalyzes the coordinated movement of the two tRNA molecules, the mRNA and conformational changes in the ribosome. This chain is Elongation factor G, found in Trichormus variabilis (strain ATCC 29413 / PCC 7937) (Anabaena variabilis).